Consider the following 280-residue polypeptide: uncharacterized protein (280 aa).

3 disordered regions span residues 20–41 (DVKK…QQQQ), 170–199 (INSP…KDKA), and 251–280 (GNSK…SFSF). Over residues 25 to 41 (QQQQQQQPQAPPQQQQQ) the composition is skewed to low complexity. The span at 178-199 (EEEKPQLSKKEEPEWLKGKDKA) shows a compositional bias: basic and acidic residues.

This is an uncharacterized protein from Dictyostelium discoideum (Social amoeba).